Consider the following 229-residue polypeptide: Peptide methionine sulfoxide reductase B3, chloroplastic (229 aa).

The N-terminal 71 residues, 1-71, are a transit peptide targeting the chloroplast; that stretch reads MGVQHLLKLR…NHNQWAASRC (71 aa). One can recognise a MsrB domain in the interval 102–223; the sequence is EEEWEAILSP…NSISLKFIPA (122 aa). The Zn(2+) site is built by Cys141, Cys144, Cys187, and Cys190. Residues Cys159 and Cys212 are joined by a disulfide bond. The active-site Nucleophile is Cys212.

It belongs to the MsrB Met sulfoxide reductase family. Zn(2+) is required as a cofactor.

The protein localises to the plastid. It is found in the chloroplast. The catalysed reaction is L-methionyl-[protein] + [thioredoxin]-disulfide + H2O = L-methionyl-(R)-S-oxide-[protein] + [thioredoxin]-dithiol. Catalyzes the reduction of methionine sulfoxide (MetSO) to methionine in proteins. Plays a protective role against oxidative stress by restoring activity to proteins that have been inactivated by methionine oxidation. MSRB family specifically reduces the MetSO R-enantiomer. The polypeptide is Peptide methionine sulfoxide reductase B3, chloroplastic (MSRB3) (Oryza sativa subsp. japonica (Rice)).